We begin with the raw amino-acid sequence, 576 residues long: Arginine--tRNA ligase (576 aa).

The 'HIGH' region signature appears at 122–132 (PNVAKQMHVGH).

This sequence belongs to the class-I aminoacyl-tRNA synthetase family. Monomer.

It is found in the cytoplasm. The enzyme catalyses tRNA(Arg) + L-arginine + ATP = L-arginyl-tRNA(Arg) + AMP + diphosphate. This is Arginine--tRNA ligase from Proteus mirabilis (strain HI4320).